We begin with the raw amino-acid sequence, 515 residues long: Pre-glycoprotein polyprotein GP complex (515 aa).

Gly-2 carries N-myristoyl glycine; by host lipidation. At 2 to 17 the chain is on the extracellular side; that stretch reads GQVIGFFQSLPEIINE. Residues 18-33 traverse the membrane as a helical segment; sequence ALNIALICVALLATIK. The Cytoplasmic portion of the chain corresponds to 34 to 58; sequence GMVNIWKSGLIQLLFFLTLAGRSCS. Residue Cys-57 coordinates Zn(2+). The Extracellular portion of the chain corresponds to 59 to 453; that stretch reads HSFTIGRFHE…QGRTPLSLVD (395 aa). 4 cysteine pairs are disulfide-bonded: Cys-87–Cys-255, Cys-300–Cys-313, Cys-322–Cys-331, and Cys-385–Cys-406. 5 N-linked (GlcNAc...) asparagine; by host glycosylation sites follow: Asn-90, Asn-112, Asn-127, Asn-180, and Asn-248. Residues Asn-386, Asn-394, and Asn-416 are each glycosylated (N-linked (GlcNAc...) asparagine; by host). Residues 454-474 traverse the membrane as a helical segment; that stretch reads LCFWSTLFYISTLFAHLVGFP. Residues 475-515 are Cytoplasmic-facing; it reads THRHLIGEGCPKPHRLTGSGICSCGHYGIPGKPVRWTKMSR. Zn(2+) contacts are provided by His-476, His-478, Cys-484, His-488, Cys-496, and Cys-498.

The protein belongs to the arenaviridae GPC protein family. Interacts with glycoprotein G2. Part of the GP complex (GP-C) together with glycoprotein G1 and glycoprotein G2. The GP-complex interacts with protein Z, which interacts with ribonucleocapsid; these interactions may induce virion budding. In terms of assembly, homotrimer; disulfide-linked. In pre-fusion state, G1 homotrimers bind G2 homotrimers via ionic interactions. Part of the GP complex (GP-C) together with glycoprotein G2 and the stable signal peptide. The GP-complex interacts with protein Z, which interacts with ribonucleocapsid; these interactions may induce virion budding. As to quaternary structure, homotrimer. Interacts with the stable signal peptide. In pre-fusion state, G2 homotrimers bind G1 homotrimers via ionic interactions. Part of the GP complex (GP-C) together with glycoprotein G1 and the stable signal peptide. Acidification in the endosome triggers rearrangements, which ultimately leads to a 6 helix bundle formed by the two heptad repeat domains (HR1 and HR2) in post-fusion state. The GP-complex interacts with protein Z, which interacts with ribonucleocapsid; these interactions may induce virion budding. Post-translationally, specific enzymatic cleavages in vivo yield mature proteins. GP-C polyprotein is cleaved in the endoplasmic reticulum by the host protease MBTPS1. Only cleaved glycoprotein is incorporated into virions. In terms of processing, the SSP remains stably associated with the GP complex following cleavage by signal peptidase and plays crucial roles in the trafficking of GP through the secretory pathway. Myristoylation is necessary for GP2-mediated fusion activity.

Its subcellular location is the virion membrane. It localises to the host endoplasmic reticulum membrane. The protein resides in the host Golgi apparatus membrane. The protein localises to the host cell membrane. Functions as a cleaved signal peptide that is retained as the third component of the GP complex (GP-C). Helps to stabilize the spike complex in its native conformation. The SSP is required for efficient glycoprotein expression, post-translational maturation cleavage of G1 and G2, glycoprotein transport to the cell surface plasma membrane, formation of infectious virus particles, and acid pH-dependent glycoprotein-mediated cell fusion. In terms of biological role, forms the virion spikes together with glycoprotein G2. The glycoprotein spike trimers are connected to the underlying matrix. Mediates virus attachment to host receptor alpha-dystroglycan DAG1. This attachment induces virion internalization predominantly through clathrin- and caveolin-independent endocytosis. Its function is as follows. Forms the virion spikes together with glycoprotein G1. The glycoprotein spike trimers are connected to the underlying matrix. Class I viral fusion protein that directs fusion of viral and host endosomal membranes, leading to delivery of the nucleocapsid into the cytoplasm. Membrane fusion is mediated by irreversible conformational changes induced by acidification. The polypeptide is Pre-glycoprotein polyprotein GP complex (Latino mammarenavirus (isolate Rat/Bolivia/MARU 1924/1965) (LATV)).